The sequence spans 98 residues: Small ribosomal subunit protein uS19 (98 aa).

This sequence belongs to the universal ribosomal protein uS19 family.

Its function is as follows. Protein S19 forms a complex with S13 that binds strongly to the 16S ribosomal RNA. In Chlorobaculum tepidum (strain ATCC 49652 / DSM 12025 / NBRC 103806 / TLS) (Chlorobium tepidum), this protein is Small ribosomal subunit protein uS19.